Here is a 506-residue protein sequence, read N- to C-terminus: Maturase K (506 aa).

Belongs to the intron maturase 2 family. MatK subfamily.

Its subcellular location is the plastid. The protein resides in the chloroplast. Its function is as follows. Usually encoded in the trnK tRNA gene intron. Probably assists in splicing its own and other chloroplast group II introns. The polypeptide is Maturase K (Trifolium hirtum (Rose clover)).